A 72-amino-acid chain; its full sequence is Translation initiation factor IF-1 (72 aa).

One can recognise an S1-like domain in the interval 2-72 (AKEDCIEMQG…SKGRIIFRSR (71 aa)).

This sequence belongs to the IF-1 family. In terms of assembly, component of the 30S ribosomal translation pre-initiation complex which assembles on the 30S ribosome in the order IF-2 and IF-3, IF-1 and N-formylmethionyl-tRNA(fMet); mRNA recruitment can occur at any time during PIC assembly.

It is found in the cytoplasm. Its function is as follows. One of the essential components for the initiation of protein synthesis. Stabilizes the binding of IF-2 and IF-3 on the 30S subunit to which N-formylmethionyl-tRNA(fMet) subsequently binds. Helps modulate mRNA selection, yielding the 30S pre-initiation complex (PIC). Upon addition of the 50S ribosomal subunit IF-1, IF-2 and IF-3 are released leaving the mature 70S translation initiation complex. The protein is Translation initiation factor IF-1 of Haemophilus influenzae (strain ATCC 51907 / DSM 11121 / KW20 / Rd).